A 487-amino-acid chain; its full sequence is Mu-like prophage FluMu tail sheath protein (487 aa).

This sequence belongs to the myoviridae tail sheath protein family.

Major component of the tail. The chain is Mu-like prophage FluMu tail sheath protein from Haemophilus influenzae (strain ATCC 51907 / DSM 11121 / KW20 / Rd).